The following is a 684-amino-acid chain: Amino-acid acetyltransferase, mitochondrial (684 aa).

The interval 414–439 (PQDATNSASEPRDPSQLSTVATRRKR) is disordered. Residues 415-434 (QDATNSASEPRDPSQLSTVA) show a composition bias toward polar residues. The N-acetyltransferase domain occupies 505-674 (GKSRMTLNDP…YEGVCRGIEP (170 aa)).

Belongs to the acetyltransferase family.

It is found in the mitochondrion. It catalyses the reaction L-glutamate + acetyl-CoA = N-acetyl-L-glutamate + CoA + H(+). The protein operates within amino-acid biosynthesis; L-arginine biosynthesis; N(2)-acetyl-L-ornithine from L-glutamate: step 1/4. N-acetylglutamate synthase involved in arginine biosynthesis. This chain is Amino-acid acetyltransferase, mitochondrial (ARG2), found in Ajellomyces capsulatus (strain NAm1 / WU24) (Darling's disease fungus).